A 197-amino-acid polypeptide reads, in one-letter code: Large ribosomal subunit protein bL25 (197 aa).

Belongs to the bacterial ribosomal protein bL25 family. CTC subfamily. In terms of assembly, part of the 50S ribosomal subunit; part of the 5S rRNA/L5/L18/L25 subcomplex. Contacts the 5S rRNA. Binds to the 5S rRNA independently of L5 and L18.

Functionally, this is one of the proteins that binds to the 5S RNA in the ribosome where it forms part of the central protuberance. The sequence is that of Large ribosomal subunit protein bL25 from Pseudomonas putida (strain GB-1).